Reading from the N-terminus, the 279-residue chain is 2-dehydro-3-deoxyphosphooctonate aldolase (279 aa).

It belongs to the KdsA family.

The protein localises to the cytoplasm. The enzyme catalyses D-arabinose 5-phosphate + phosphoenolpyruvate + H2O = 3-deoxy-alpha-D-manno-2-octulosonate-8-phosphate + phosphate. It participates in carbohydrate biosynthesis; 3-deoxy-D-manno-octulosonate biosynthesis; 3-deoxy-D-manno-octulosonate from D-ribulose 5-phosphate: step 2/3. Its pathway is bacterial outer membrane biogenesis; lipopolysaccharide biosynthesis. This Bartonella henselae (strain ATCC 49882 / DSM 28221 / CCUG 30454 / Houston 1) (Rochalimaea henselae) protein is 2-dehydro-3-deoxyphosphooctonate aldolase.